Here is a 458-residue protein sequence, read N- to C-terminus: UPF0210 protein MMP1427 (458 aa).

Belongs to the UPF0210 family.

The sequence is that of UPF0210 protein MMP1427 from Methanococcus maripaludis (strain DSM 14266 / JCM 13030 / NBRC 101832 / S2 / LL).